We begin with the raw amino-acid sequence, 226 residues long: Adenylate kinase (226 aa).

Gly12–Thr17 contacts ATP. The tract at residues Glu32–Val61 is NMP. AMP is bound by residues Ser33, Arg38, Asp59–Val61, Gly87–Arg90, and Gln94. The tract at residues Gly128–Asp171 is LID. Arg129 provides a ligand contact to ATP. Residues Arg168 and Arg180 each contribute to the AMP site. Residue Ala213 participates in ATP binding.

It belongs to the adenylate kinase family. As to quaternary structure, monomer.

The protein localises to the cytoplasm. It catalyses the reaction AMP + ATP = 2 ADP. It functions in the pathway purine metabolism; AMP biosynthesis via salvage pathway; AMP from ADP: step 1/1. Functionally, catalyzes the reversible transfer of the terminal phosphate group between ATP and AMP. Plays an important role in cellular energy homeostasis and in adenine nucleotide metabolism. The sequence is that of Adenylate kinase from Desulfotalea psychrophila (strain LSv54 / DSM 12343).